The sequence spans 349 residues: NADH-quinone oxidoreductase subunit H (349 aa).

Helical transmembrane passes span 20–42 (WTLIKIVLIVAPMMLGVAYLTYF), 88–108 (GIFIIAPMLAIAPALAAWAVV), 123–143 (LLYIMAITSMGVYGIILSGWA), 167–187 (MGFSLICVLMVSNSLNLVEIV), 202–222 (FLSWNWLPLFPMFLVYLISGV), 249–269 (GMAFAVFFLAEYANMILVSAL), 284–304 (FLPDGILWLFAKMSAILFLFL), and 325–345 (VFVPICLIWLVVVGVWMMSPL).

The protein belongs to the complex I subunit 1 family. NDH-1 is composed of 14 different subunits. Subunits NuoA, H, J, K, L, M, N constitute the membrane sector of the complex.

The protein localises to the cell inner membrane. The catalysed reaction is a quinone + NADH + 5 H(+)(in) = a quinol + NAD(+) + 4 H(+)(out). Its function is as follows. NDH-1 shuttles electrons from NADH, via FMN and iron-sulfur (Fe-S) centers, to quinones in the respiratory chain. The immediate electron acceptor for the enzyme in this species is believed to be ubiquinone. Couples the redox reaction to proton translocation (for every two electrons transferred, four hydrogen ions are translocated across the cytoplasmic membrane), and thus conserves the redox energy in a proton gradient. This subunit may bind ubiquinone. The chain is NADH-quinone oxidoreductase subunit H from Dechloromonas aromatica (strain RCB).